Reading from the N-terminus, the 101-residue chain is Large ribosomal subunit protein uL23 (101 aa).

Belongs to the universal ribosomal protein uL23 family. In terms of assembly, part of the 50S ribosomal subunit. Contacts protein L29, and trigger factor when it is bound to the ribosome.

Its function is as follows. One of the early assembly proteins it binds 23S rRNA. One of the proteins that surrounds the polypeptide exit tunnel on the outside of the ribosome. Forms the main docking site for trigger factor binding to the ribosome. In Trichodesmium erythraeum (strain IMS101), this protein is Large ribosomal subunit protein uL23.